Here is a 107-residue protein sequence, read N- to C-terminus: Nucleoid-associated protein BMEA_A0033 (107 aa).

This sequence belongs to the YbaB/EbfC family. In terms of assembly, homodimer.

Its subcellular location is the cytoplasm. The protein localises to the nucleoid. Its function is as follows. Binds to DNA and alters its conformation. May be involved in regulation of gene expression, nucleoid organization and DNA protection. The sequence is that of Nucleoid-associated protein BMEA_A0033 from Brucella melitensis biotype 2 (strain ATCC 23457).